Consider the following 2290-residue polypeptide: Protein Ycf2 (2290 aa).

1638-1645 serves as a coordination point for ATP; the sequence is GSIGTGRS.

The protein belongs to the Ycf2 family.

It localises to the plastid. The protein resides in the chloroplast stroma. In terms of biological role, probable ATPase of unknown function. Its presence in a non-photosynthetic plant (Epifagus virginiana) and experiments in tobacco indicate that it has an essential function which is probably not related to photosynthesis. This Phalaenopsis aphrodite subsp. formosana (Moth orchid) protein is Protein Ycf2.